Reading from the N-terminus, the 73-residue chain is uncharacterized protein (73 aa).

Residues 48 to 73 form a disordered region; it reads AKEPEKKTPSMEAKATSLSPNKASAS. The segment covering 63-73 has biased composition (polar residues); it reads TSLSPNKASAS.

This is an uncharacterized protein from Saccharomyces cerevisiae (strain ATCC 204508 / S288c) (Baker's yeast).